A 323-amino-acid chain; its full sequence is Small ribosomal subunit protein uS9m (323 aa).

The interval 298–323 (TRDARKVERKKPGKVKARKSPTWVKR) is disordered. Residues 304–323 (VERKKPGKVKARKSPTWVKR) show a composition bias toward basic residues.

Belongs to the universal ribosomal protein uS9 family.

It is found in the mitochondrion. In Debaryomyces hansenii (strain ATCC 36239 / CBS 767 / BCRC 21394 / JCM 1990 / NBRC 0083 / IGC 2968) (Yeast), this protein is Small ribosomal subunit protein uS9m (MRPS9).